The following is a 483-amino-acid chain: GDP-fucose protein O-fucosyltransferase 3 (483 aa).

Residues 1 to 8 (MVRIPRRK) are Cytoplasmic-facing. A helical; Signal-anchor for type II membrane protein membrane pass occupies residues 9–31 (LLPSCLCMTATVFLMVTVQVLVE). Topologically, residues 32–483 (LGKFERKKFK…FWALVFKDSF (452 aa)) are lumenal. Positions 45-64 (LQDGQKDVEGDPKHLNPLPK) are disordered. Residues asparagine 110, asparagine 168, and asparagine 318 are each glycosylated (N-linked (GlcNAc...) asparagine). Cysteine 389 and cysteine 392 are joined by a disulfide. Asparagine 468 carries an N-linked (GlcNAc...) asparagine glycan.

This sequence belongs to the glycosyltransferase 10 family.

Its subcellular location is the endoplasmic reticulum membrane. The enzyme catalyses L-threonyl-[protein] + GDP-beta-L-fucose = 3-O-(alpha-L-fucosyl)-L-threonyl-[protein] + GDP + H(+). It carries out the reaction L-seryl-[protein] + GDP-beta-L-fucose = 3-O-(alpha-L-fucosyl)-L-seryl-[protein] + GDP + H(+). Its pathway is protein modification; protein glycosylation. In terms of biological role, protein O-fucosyltransferase that specifically catalyzes O-fucosylation of serine or threonine residues in EMI domains of target proteins, such as MMRN1, MMRN2 and EMID1. Attaches fucose through an O-glycosidic linkage. O-fucosylation of EMI domain-containing proteins may be required for facilitating protein folding and secretion. May also show alpha-(1,3)-fucosyltransferase activity toward the innermost N-acetyl glucosamine (GlcNAc) residue in biantennary N-glycan acceptors. However, this was tested with a library of synthetic substrates and this activity is unsure in vivo. May be involved in biosynthesis of Lewis X-carrying biantennary N-glycans that regulate neuron stem cell self-renewal during brain development. In Rattus norvegicus (Rat), this protein is GDP-fucose protein O-fucosyltransferase 3 (Fut10).